The sequence spans 657 residues: Broad substrate specificity ATP-binding cassette transporter ABCG2 (657 aa).

Positions 1–25 (MSSSNDHVLVPMSQRNKNGLPGMSS) are disordered. Residues 1–395 (MSSSNDHVLV…KNLLGNPQAS (395 aa)) lie on the Cytoplasmic side of the membrane. An ABC transporter domain is found at 48 to 285 (VKSGFLVRKT…FASAGYHCEP (238 aa)). ATP-binding positions include 79–86 (GPTGGGKS), 183–189 (RGISGGE), Glu-210, and His-242. One can recognise an ABC transmembrane type-2 domain in the interval 389–653 (LGNPQASVAQ…TIAYLKLLFL (265 aa)). A helical transmembrane segment spans residues 396-416 (VAQLIVTVILGLIIGALYFGL). Residues 417 to 428 (KNDPTGMQNRAG) lie on the Extracellular side of the membrane. The helical transmembrane segment at 429–449 (VFFFLTTNQCFTSVSAVELFV) threads the bilayer. Topologically, residues 450–477 (VEKKLFIHEYISGYYRVSSYFFGKLVSD) are cytoplasmic. A helical membrane pass occupies residues 478–498 (LLPMRFLPSVIYTCILYFMLG). The Extracellular segment spans residues 499–506 (LKRTVEAF). Residues 507-527 (FIMMFTLIMVAYTASSMALAI) form a helical membrane-spanning segment. Over 528 to 535 (AAGQSVVS) the chain is Cytoplasmic. The helical transmembrane segment at 536 to 556 (VATLLMTISFVFMMLFSGLLV) threads the bilayer. Residues 557 to 632 (NLRTIGPWLS…LSPWGLWRNH (76 aa)) lie on the Extracellular side of the membrane. Cys-592 and Cys-610 are oxidised to a cystine. N-linked (GlcNAc...) asparagine glycans are attached at residues Asn-596 and Asn-600. A helical membrane pass occupies residues 633-653 (VALACMIIIFLTIAYLKLLFL). Over 654-657 (KKYS) the chain is Cytoplasmic.

Belongs to the ABC transporter superfamily. ABCG family. Eye pigment precursor importer (TC 3.A.1.204) subfamily. As to quaternary structure, homodimer; disulfide-linked. The minimal functional unit is a homodimer, but the major oligomeric form in plasma membrane is a homotetramer with possibility of higher order oligomerization up to homododecamers. N-glycosylated in brain capillary, kidney and small intestine but not in heart. Post-translationally, N-glycosylated. Glycosylation-deficient ABCG2 is normally expressed and functional. In terms of processing, phosphorylated. Phosphorylation may regulate the localization to the plasma membrane, the homooligomerization and therefore, the activity of the transporter. Highly expressed in brain capillary, kidney and small intestine. Lower expression in heart. Preferentially expressed (at protein level) on the luminal membrane of brain capillaries, in kidney and small intestine.

Its subcellular location is the cell membrane. The protein localises to the apical cell membrane. The protein resides in the mitochondrion membrane. The enzyme catalyses ATP + H2O + xenobioticSide 1 = ADP + phosphate + xenobioticSide 2.. The catalysed reaction is urate(in) + ATP + H2O = urate(out) + ADP + phosphate + H(+). It carries out the reaction indoxyl sulfate(in) + ATP + H2O = indoxyl sulfate(out) + ADP + phosphate + H(+). It catalyses the reaction sphing-4-enine 1-phosphate(in) + ATP + H2O = sphing-4-enine 1-phosphate(out) + ADP + phosphate + H(+). The enzyme catalyses estrone 3-sulfate(in) + ATP + H2O = estrone 3-sulfate(out) + ADP + phosphate + H(+). The catalysed reaction is dehydroepiandrosterone 3-sulfate(in) + ATP + H2O = dehydroepiandrosterone 3-sulfate(out) + ADP + phosphate + H(+). It carries out the reaction 4-methylumbelliferone sulfate(in) + ATP + H2O = 4-methylumbelliferone sulfate(out) + ADP + phosphate + H(+). It catalyses the reaction 5,7-dimethyl-2-methylamino-4-(3-pyridylmethyl)-1,3-benzothiazol-6-yl beta-D-glucuronate(in) + ATP + H2O = 5,7-dimethyl-2-methylamino-4-(3-pyridylmethyl)-1,3-benzothiazol-6-yl beta-D-glucuronate(out) + ADP + phosphate + H(+). The enzyme catalyses 4-methylumbelliferone beta-D-glucuronate(in) + ATP + H2O = 4-methylumbelliferone beta-D-glucuronate(out) + ADP + phosphate + H(+). The catalysed reaction is 5,7-dimethyl-2-methylamino-4-(3-pyridylmethyl)-1,3-benzothiazol-6-yl sulfate(in) + ATP + H2O = 5,7-dimethyl-2-methylamino-4-(3-pyridylmethyl)-1,3-benzothiazol-6-yl sulfate(out) + ADP + phosphate + H(+). It carries out the reaction 17beta-estradiol 17-O-(beta-D-glucuronate)(in) + ATP + H2O = 17beta-estradiol 17-O-(beta-D-glucuronate)(out) + ADP + phosphate + H(+). It catalyses the reaction methotrexate(in) + ATP + H2O = methotrexate(out) + ADP + phosphate + H(+). The enzyme catalyses riboflavin(in) + ATP + H2O = riboflavin(out) + ADP + phosphate + H(+). The catalysed reaction is pheophorbide a(in) + ATP + H2O = pheophorbide a(out) + ADP + phosphate + H(+). It carries out the reaction itaconate(in) + ATP + H2O = itaconate(out) + ADP + phosphate + H(+). Broad substrate specificity ATP-dependent transporter of the ATP-binding cassette (ABC) family that actively extrudes a wide variety of physiological compounds, dietary toxins and xenobiotics from cells. Involved in porphyrin homeostasis, mediating the export of protoporphyrin IX (PPIX) from both mitochondria to cytosol and cytosol to extracellular space, it also functions in the cellular export of heme. Also mediates the efflux of sphingosine-1-P from cells. Acts as a urate exporter functioning in both renal and extrarenal urate excretion. In kidney, it also functions as a physiological exporter of the uremic toxin indoxyl sulfate. Also involved in the excretion of steroids like estrone 3-sulfate/E1S, 3beta-sulfooxy-androst-5-en-17-one/DHEAS, and other sulfate conjugates. Mediates the secretion of the riboflavin and biotin vitamins into milk. Extrudes pheophorbide a, a phototoxic porphyrin catabolite of chlorophyll, reducing its bioavailability. Plays an important role in the exclusion of xenobiotics from the brain. It confers to cells a resistance to multiple drugs and other xenobiotics including mitoxantrone, pheophorbide, camptothecin, methotrexate, azidothymidine, and the anthracyclines daunorubicin and doxorubicin, through the control of their efflux. In placenta, it limits the penetration of drugs from the maternal plasma into the fetus. May play a role in early stem cell self-renewal by blocking differentiation. In inflammatory macrophages, exports itaconate from the cytosol to the extracellular compartment and limits the activation of TFEB-dependent lysosome biogenesis involved in antibacterial innate immune response. The chain is Broad substrate specificity ATP-binding cassette transporter ABCG2 (Abcg2) from Rattus norvegicus (Rat).